We begin with the raw amino-acid sequence, 350 residues long: Twinfilin-1 (350 aa).

Ser-2 bears the N-acetylserine mark. Positions 2 to 139 constitute an ADF-H 1 domain; sequence SHRTGIQASE…SLHGYKKYLL (138 aa). Phosphoserine occurs at positions 143 and 277. Positions 175–313 constitute an ADF-H 2 domain; sequence LQGVAFPISR…TADFLYEEVH (139 aa). Tyr-309 is modified (phosphotyrosine). A disordered region spans residues 316 to 350; the sequence is QHAHKQSFAKPKGPAGKRGIRRLIRGPAETEATTD. The residue at position 349 (Thr-349) is a Phosphothreonine.

This sequence belongs to the actin-binding proteins ADF family. Twinfilin subfamily. Interacts with G-actin; ADP-actin form and capping protein (CP). May also be able to interact with TWF2 and phosphoinositides, PI(4,5)P2. When bound to PI(4,5)P2, it is down-regulated. Interacts with ACTG1. Post-translationally, phosphorylated on serine and threonine residues.

The protein resides in the cytoplasm. It localises to the cytoskeleton. In terms of biological role, actin-binding protein involved in motile and morphological processes. Inhibits actin polymerization, likely by sequestering G-actin. By capping the barbed ends of filaments, it also regulates motility. Seems to play an important role in clathrin-mediated endocytosis and distribution of endocytic organelles. This chain is Twinfilin-1 (TWF1), found in Pongo abelii (Sumatran orangutan).